Consider the following 223-residue polypeptide: UPF0758 protein Plut_0598 (223 aa).

The region spanning 100 to 222 (RVQGAKDVFE…WFSFRESNLL (123 aa)) is the MPN domain. Zn(2+) is bound by residues histidine 171, histidine 173, and aspartate 184. Residues 171 to 184 (HNHPSGDTEPSNAD) carry the JAMM motif motif.

It belongs to the UPF0758 family.

This chain is UPF0758 protein Plut_0598, found in Chlorobium luteolum (strain DSM 273 / BCRC 81028 / 2530) (Pelodictyon luteolum).